The primary structure comprises 1434 residues: Probable ATP-dependent DNA helicase HFM1 (1434 aa).

Positions 289–476 (DDLLYTDRNF…WLSDGERPAV (188 aa)) constitute a Helicase ATP-binding domain. Residue 302-309 (APTGSGKT) coordinates ATP. Residues 410–413 (DEVH) carry the DEAH box motif. Residues 514-718 (KVYSVIRTYS…DVNIALDWIR (205 aa)) enclose the Helicase C-terminal domain. An SEC63 domain is found at 775-1089 (PTEAGRLMAW…VGLDIHQKFT (315 aa)). The tract at residues 1110–1130 (TDISHSDYSGRATATGSSKGM) is disordered. A C4-type zinc finger spans residues 1141 to 1156 (CHHHCKNKHACGHDCC). The segment at 1294 to 1333 (GFGDTRDSSLGGSKLPFQKSSSRFQRDNSNSFASSPGKPD) is disordered. The span at 1311-1327 (QKSSSRFQRDNSNSFAS) shows a compositional bias: polar residues.

This sequence belongs to the helicase family. SKI2 subfamily. Requires Zn(2+) as cofactor.

The catalysed reaction is Couples ATP hydrolysis with the unwinding of duplex DNA by translocating in the 3'-5' direction.. It catalyses the reaction ATP + H2O = ADP + phosphate + H(+). Functionally, required for crossover formation and complete synapsis of homologous chromosomes during meiosis. This chain is Probable ATP-dependent DNA helicase HFM1, found in Mus musculus (Mouse).